Here is a 118-residue protein sequence, read N- to C-terminus: Large ribosomal subunit protein bL19 (118 aa).

Belongs to the bacterial ribosomal protein bL19 family.

Functionally, this protein is located at the 30S-50S ribosomal subunit interface and may play a role in the structure and function of the aminoacyl-tRNA binding site. The polypeptide is Large ribosomal subunit protein bL19 (Herpetosiphon aurantiacus (strain ATCC 23779 / DSM 785 / 114-95)).